The sequence spans 55 residues: KNTGRRPNYRECEMRDGECNAKVAKTAEPDSKTNTTGNNSFAIKTSTLLLAVLLF.

Residue Asn-34 is glycosylated (N-linked (GlcNAc...) asparagine). Asn-38 carries GPI-anchor amidated asparagine lipidation. Positions 39-55 (NSFAIKTSTLLLAVLLF) are cleaved as a propeptide — removed in mature form.

It is found in the cell membrane. Functionally, VSG forms a coat on the surface of the parasite. The trypanosome evades the immune response of the host by expressing a series of antigenically distinct VSGs from an estimated 1000 VSG genes. In Trypanosoma brucei rhodesiense, this protein is Variant surface glycoprotein ETAT 1.2.